A 382-amino-acid polypeptide reads, in one-letter code: Putative glutamate--cysteine ligase 2-1 (382 aa).

This sequence belongs to the glutamate--cysteine ligase type 2 family. YbdK subfamily.

It carries out the reaction L-cysteine + L-glutamate + ATP = gamma-L-glutamyl-L-cysteine + ADP + phosphate + H(+). ATP-dependent carboxylate-amine ligase which exhibits weak glutamate--cysteine ligase activity. The polypeptide is Putative glutamate--cysteine ligase 2-1 (Frankia casuarinae (strain DSM 45818 / CECT 9043 / HFP020203 / CcI3)).